The following is a 1687-amino-acid chain: Gag-Pol polyprotein (1687 aa).

A lipid anchor (N-myristoyl glycine; by host) is attached at Gly-2. Disordered stretches follow at residues 107-126 (GQDNGRKSAGGRPSAPSRLP), 136-195 (LLSE…STVA), 420-447 (HKRETEEEKQEREKKETEERERRRDRRQ), and 466-485 (GRQAGNLSNRAMRAPREGRP). The PTAP/PSAP motif signature appears at 108-111 (QDNG). The span at 139–153 (EPPPYPTSPPPPPAP) shows a compositional bias: pro residues. A PPXY motif motif is present at residues 140 to 143 (PPPY). The stretch at 408–453 (LQDLIKEAEKVYHKRETEEEKQEREKKETEERERRRDRRQEKNLTK) forms a coiled coil. Residues 490–507 (DQCAYCKERGHWARECPR) form a CCHC-type zinc finger. The Peptidase A2 domain occupies 544–614 (TEFLVDTGAE…CPAPLLGRDL (71 aa)). The active-site Protease; shared with dimeric partner is the Asp-549. One can recognise a Reverse transcriptase domain in the interval 721–912 (LDLGILVPCQ…EEVTYLGYLL (192 aa)). 7 residues coordinate Mg(2+): Asp-789, Asp-863, Asp-864, Asp-1162, Glu-1200, Asp-1221, and Asp-1291. The region spanning 1153 to 1299 (LPGVPAWYTD…ADEAAKQAAQ (147 aa)) is the RNase H type-1 domain. An HHCC-type zinc finger spans residues 1339 to 1377 (HQLTHLGPDKLLQLVGRTSFHIPNLQSVVREITSKCQVC). The Integrase catalytic domain maps to 1394-1552 (RGDRPGVYWE…TPYEILHGGP (159 aa)). Residues Asp-1405 and Asp-1464 each contribute to the Mg(2+) site.

As to quaternary structure, homohexamer; further associates as homomultimer. The virus core is composed of a lattice formed from hexagonal rings, each containing six capsid monomers. Interacts (via PPXY motif) with host NEDD4. Interacts (via PSAP motif) with host TSG101. In terms of assembly, the reverse transcriptase is a monomer (Potential). Interacts (via RNase domains) with host release factor ETF1; this interaction is essential for translational readthrough of amber codon between viral gag and pol genes, as well as for viral replication. As to quaternary structure, homodimer. Mg(2+) serves as cofactor. Specific enzymatic cleavages by the viral protease yield mature proteins. The protease is released by autocatalytic cleavage. The polyprotein is cleaved during and after budding, this process is termed maturation. Post-translationally, phosphorylated on serine residues.

It is found in the virion. It localises to the host cell membrane. The protein resides in the host late endosome membrane. Its subcellular location is the host endosome. The protein localises to the host multivesicular body. It is found in the host cytoplasm. It carries out the reaction DNA(n) + a 2'-deoxyribonucleoside 5'-triphosphate = DNA(n+1) + diphosphate. The enzyme catalyses Endonucleolytic cleavage to 5'-phosphomonoester.. Its activity is regulated as follows. Protease: Most efficiently inhibited by Amprenavir, which is able to block Gag-Pol processing in infected cells. Functionally, plays a role in budding and is processed by the viral protease during virion maturation outside the cell. During budding, it recruits, in a PPXY-dependent or independent manner, Nedd4-like ubiquitin ligases that conjugate ubiquitin molecules to Gag-Pol, or to Gag-Pol binding host factors. Interaction with HECT ubiquitin ligases probably links the viral protein to the host ESCRT pathway and facilitates release. In terms of biological role, targets Gag and gag-pol polyproteins to the plasma membrane via a multipartite membrane binding signal, that includes its myristoylated N-terminus. Also mediates nuclear localization of the pre-integration complex. Constituent of the pre-integration complex (PIC) which tethers the latter to mitotic chromosomes. This allows the integration of the viral genome into the host DNA. Its function is as follows. Forms the spherical core of the virion that encapsulates the genomic RNA-nucleocapsid complex. Functionally, involved in the packaging and encapsidation of two copies of the genome. Binds with high affinity to conserved UCUG elements within the packaging signal, located near the 5'-end of the genome. This binding is dependent on genome dimerization. Acts as a nucleic acid chaperone which is involved in rearrangement of nucleic acid secondary structures during gRNA retrotranscription. In terms of biological role, protease: The aspartyl protease mediates proteolytic cleavages of Gag and Gag-Pol polyproteins during or shortly after the release of the virion from the plasma membrane. Cleavages take place as an ordered, step-wise cascade to yield mature proteins. This process is called maturation. Displays maximal activity during the budding process just prior to particle release from the cell. Reverse transcriptase/ribonuclease H: RT is a multifunctional enzyme that converts the viral dimeric RNA genome into dsDNA in the cytoplasm, shortly after virus entry into the cell. This enzyme displays a DNA polymerase activity that can copy either DNA or RNA templates, and a ribonuclease H (RNase H) activity that cleaves the RNA strand of RNA-DNA heteroduplexes in a partially processive 3' to 5' endonucleasic mode. Conversion of viral genomic RNA into dsDNA requires many steps. A tRNA binds to the primer-binding site (PBS) situated at the 5' end of the viral RNA. RT uses the 3' end of the tRNA primer to perform a short round of RNA-dependent minus-strand DNA synthesis. The reading proceeds through the U5 region and ends after the repeated (R) region which is present at both ends of viral RNA. The portion of the RNA-DNA heteroduplex is digested by the RNase H, resulting in a ssDNA product attached to the tRNA primer. This ssDNA/tRNA hybridizes with the identical R region situated at the 3' end of viral RNA. This template exchange, known as minus-strand DNA strong stop transfer, can be either intra- or intermolecular. RT uses the 3' end of this newly synthesized short ssDNA to perform the RNA-dependent minus-strand DNA synthesis of the whole template. RNase H digests the RNA template except for a polypurine tract (PPT) situated at the 5' end of the genome. It is not clear if both polymerase and RNase H activities are simultaneous. RNase H probably can proceed both in a polymerase-dependent (RNA cut into small fragments by the same RT performing DNA synthesis) and a polymerase-independent mode (cleavage of remaining RNA fragments by free RTs). Secondly, RT performs DNA-directed plus-strand DNA synthesis using the PPT that has not been removed by RNase H as primers. PPT and tRNA primers are then removed by RNase H. The 3' and 5' ssDNA PBS regions hybridize to form a circular dsDNA intermediate. Strand displacement synthesis by RT to the PBS and PPT ends produces a blunt ended, linear dsDNA copy of the viral genome that includes long terminal repeats (LTRs) at both ends. Its function is as follows. Catalyzes viral DNA integration into the host chromosome, by performing a series of DNA cutting and joining reactions. This enzyme activity takes place after virion entry into a cell and reverse transcription of the RNA genome in dsDNA. The first step in the integration process is 3' processing. This step requires a complex comprising the viral genome, matrix protein and integrase. This complex is called the pre-integration complex (PIC). The integrase protein removes 2 nucleotides from each 3' end of the viral DNA, leaving recessed CA OH's at the 3' ends. In the second step that requires cell division, the PIC enters cell nucleus. In the third step, termed strand transfer, the integrase protein joins the previously processed 3' ends to the 5' ends of strands of target cellular DNA at the site of integration. The last step is viral DNA integration into host chromosome. The sequence is that of Gag-Pol polyprotein (pro-pol) from Phascolarctos cinereus (Koala).